We begin with the raw amino-acid sequence, 442 residues long: Histidine--tRNA ligase (442 aa).

This sequence belongs to the class-II aminoacyl-tRNA synthetase family. As to quaternary structure, homodimer.

It is found in the cytoplasm. It catalyses the reaction tRNA(His) + L-histidine + ATP = L-histidyl-tRNA(His) + AMP + diphosphate + H(+). The polypeptide is Histidine--tRNA ligase (Rhodopirellula baltica (strain DSM 10527 / NCIMB 13988 / SH1)).